We begin with the raw amino-acid sequence, 381 residues long: Flagellar P-ring protein (381 aa).

Residues Met-1–Ala-33 form the signal peptide.

This sequence belongs to the FlgI family. The basal body constitutes a major portion of the flagellar organelle and consists of four rings (L,P,S, and M) mounted on a central rod.

Its subcellular location is the periplasm. The protein localises to the bacterial flagellum basal body. Assembles around the rod to form the L-ring and probably protects the motor/basal body from shearing forces during rotation. This chain is Flagellar P-ring protein, found in Albidiferax ferrireducens (strain ATCC BAA-621 / DSM 15236 / T118) (Rhodoferax ferrireducens).